We begin with the raw amino-acid sequence, 156 residues long: Large ribosomal subunit protein uL15 (156 aa).

Basic and acidic residues predominate over residues 1–13; that stretch reads MKLNEIKDNEGAT. Residues 1–39 form a disordered region; sequence MKLNEIKDNEGATKNRKRLGRGIGSGSGKTAGRGVKGQK. A compositionally biased stretch (gly residues) spans 21-35; that stretch reads RGIGSGSGKTAGRGV.

It belongs to the universal ribosomal protein uL15 family. Part of the 50S ribosomal subunit.

In terms of biological role, binds to the 23S rRNA. This is Large ribosomal subunit protein uL15 from Rhizobium meliloti (strain 1021) (Ensifer meliloti).